The following is a 463-amino-acid chain: Glutamate--tRNA ligase (463 aa).

The 'HIGH' region motif lies at 10–20; the sequence is PSPTGHLHIGG. A 'KMSKS' region motif is present at residues 236-240; the sequence is KLSKR. Lys-239 lines the ATP pocket.

This sequence belongs to the class-I aminoacyl-tRNA synthetase family. Glutamate--tRNA ligase type 1 subfamily. In terms of assembly, monomer.

The protein localises to the cytoplasm. It catalyses the reaction tRNA(Glu) + L-glutamate + ATP = L-glutamyl-tRNA(Glu) + AMP + diphosphate. Catalyzes the attachment of glutamate to tRNA(Glu) in a two-step reaction: glutamate is first activated by ATP to form Glu-AMP and then transferred to the acceptor end of tRNA(Glu). The polypeptide is Glutamate--tRNA ligase (Nitratidesulfovibrio vulgaris (strain DP4) (Desulfovibrio vulgaris)).